A 418-amino-acid polypeptide reads, in one-letter code: Histidine--tRNA ligase (418 aa).

It belongs to the class-II aminoacyl-tRNA synthetase family.

The protein localises to the cytoplasm. The catalysed reaction is tRNA(His) + L-histidine + ATP = L-histidyl-tRNA(His) + AMP + diphosphate + H(+). The chain is Histidine--tRNA ligase from Methanococcus vannielii (strain ATCC 35089 / DSM 1224 / JCM 13029 / OCM 148 / SB).